The sequence spans 253 residues: Chloride intracellular channel protein 4 (253 aa).

Ala-2 carries the post-translational modification N-acetylalanine. A required for insertion into the membrane region spans residues 2–101 (ALSMPLNGLK…EEFLEEVLCP (100 aa)). Ser-4 carries the post-translational modification Phosphoserine. Residue Lys-24 is modified to N6-acetyllysine. Residues 37-57 (FSQRLFMILWLKGVVFSVSTV) form a helical membrane-spanning segment. The GST C-terminal domain maps to 81 to 244 (NSEVKTDVNK…PSDKEVEIAY (164 aa)). The residue at position 130 (Lys-130) is an N6-acetyllysine. Ser-132, Ser-167, and Ser-236 each carry phosphoserine. The residue at position 244 (Tyr-244) is a Phosphotyrosine.

It belongs to the chloride channel CLIC family. Monomer. Interacts with HRH3.

The protein localises to the cytoplasm. The protein resides in the cytoskeleton. It localises to the microtubule organizing center. Its subcellular location is the centrosome. It is found in the cytoplasmic vesicle membrane. The protein localises to the nucleus. The protein resides in the cell membrane. It localises to the mitochondrion. Its subcellular location is the cell junction. The enzyme catalyses chloride(in) = chloride(out). It catalyses the reaction thiocyanate(in) = thiocyanate(out). The catalysed reaction is nitrate(in) = nitrate(out). It carries out the reaction iodide(out) = iodide(in). The enzyme catalyses bromide(in) = bromide(out). It catalyses the reaction fluoride(in) = fluoride(out). The catalysed reaction is choline(out) = choline(in). Its function is as follows. In the soluble state, catalyzes glutaredoxin-like thiol disulfide exchange reactions with reduced glutathione as electron donor. Can insert into membranes and form voltage-dependent multi-ion conductive channels. Membrane insertion seems to be redox-regulated and may occur only under oxidizing conditions. Has alternate cellular functions like a potential role in angiogenesis or in maintaining apical-basolateral membrane polarity during mitosis and cytokinesis. Could also promote endothelial cell proliferation and regulate endothelial morphogenesis (tubulogenesis). Promotes cell-surface expression of HRH3. The sequence is that of Chloride intracellular channel protein 4 (CLIC4) from Pongo abelii (Sumatran orangutan).